Consider the following 1181-residue polypeptide: C5a peptidase (1181 aa).

Positions 1–31 (MRKKQKLPFDKLAIALMSTSILLNAQSDIKA) are cleaved as a signal peptide. Polar residues predominate over residues 33–52 (TVTEDTPATEQAVETPQPTA). A disordered region spans residues 33–117 (TVTEDTPATE…PSQVKTLQEK (85 aa)). The segment covering 70-81 (DDAEETIADDAN) has biased composition (acidic residues). In terms of domain architecture, Peptidase S8 spans 99–581 (KATIRDLNDP…AGAVDAKKAS (483 aa)). Active-site charge relay system residues include Asp130, His193, and Ser512. Composition is skewed to basic and acidic residues over residues 1029–1054 (EGHS…KPEQ), 1061–1071 (PDKKPETKPEQ), 1078–1088 (PDKKPETKPEQ), and 1095–1107 (PDKK…EKDS). The disordered stretch occupies residues 1029–1150 (EGHSNKPEQD…KDQLPTTNDK (122 aa)). 5 repeat units span residues 1034–1050 (KPEQ…KPET), 1051–1067 (KPEQ…KPET), 1068–1084 (KPEQ…KPET), 1085–1101 (KPEQ…KPET), and 1102–1118 (KPEK…TPQK). The segment at 1034-1118 (KPEQDGSDQA…GQTPGKTPQK (85 aa)) is 5 X 17 AA tandem repeats. Polar residues-rich tracts occupy residues 1109–1123 (GQTP…QPSR) and 1137–1147 (KASTKDQLPTT). Positions 1144–1148 (LPTTN) match the LPXTG sorting signal motif. The residue at position 1147 (Thr1147) is a Pentaglycyl murein peptidoglycan amidated threonine. Positions 1148–1181 (NDKDTNRLHLLKLVMTTFFLGLVAHIFKTKRTED) are cleaved as a propeptide — removed by sortase.

The protein belongs to the peptidase S8 family. Post-translationally, cleaved by SpeB protease; leading to its degradation. Degradation by SpeB is probably strictly regulated to preserve integrity of C5a peptidase.

The protein resides in the secreted. Its subcellular location is the cell wall. The catalysed reaction is The primary cleavage site is at 67-His-|-Lys-68 in human C5a with a minor secondary cleavage site at 58-Ala-|-Ser-59.. Its function is as follows. This virulence factor of S.pyogenes specifically cleaves the human serum chemotaxin C5a at '68-Lys-|-Asp-69' bond near its C-terminus, destroying its ability to serve as a chemoattractant. The chain is C5a peptidase (scpA) from Streptococcus pyogenes serotype M1.